Consider the following 256-residue polypeptide: Major prion protein (256 aa).

Residues 1–24 form the signal peptide; the sequence is MVKSHIGSWILVLFVAMWSDVGLC. Positions 25 to 233 are interaction with GRB2, ERI3 and SYN1; that stretch reads KKRPKPGGGW…ESQAYYQRGA (209 aa). The tract at residues 28–110 is disordered; the sequence is PKPGGGWNTG…QWNKPSKPKT (83 aa). 5 repeat units span residues 54 to 62, 63 to 70, 71 to 78, 79 to 86, and 87 to 95. The tract at residues 54–95 is 5 X 8 AA tandem repeats of P-H-G-G-G-W-G-Q; the sequence is PQGAGGWGQPHGGGWGQPHGGGWGQPHGGGWGQPHGGGGWGQ. The segment covering 56 to 97 has biased composition (gly residues); the sequence is GAGGWGQPHGGGWGQPHGGGWGQPHGGGWGQPHGGGGWGQGG. Cu(2+) is bound by residues His64, Gly65, Gly66, His72, Gly73, Gly74, His80, Gly81, Gly82, His88, Gly90, and Gly91. An intrachain disulfide couples Cys182 to Cys217. N-linked (GlcNAc...) asparagine glycans are attached at residues Asn184 and Asn200. Ala233 carries the GPI-anchor amidated alanine lipid modification. Residues 234-256 constitute a propeptide, removed in mature form; sequence SVILFSSPPVILLISFLIFLIVG.

This sequence belongs to the prion family. In terms of assembly, monomer and homodimer. Has a tendency to aggregate into amyloid fibrils containing a cross-beta spine, formed by a steric zipper of superposed beta-strands. Soluble oligomers may represent an intermediate stage on the path to fibril formation. Copper binding may promote oligomerization. Interacts with GRB2, APP, ERI3/PRNPIP and SYN1. Mislocalized cytosolically exposed PrP interacts with MGRN1; this interaction alters MGRN1 subcellular location and causes lysosomal enlargement. Interacts with KIAA1191.

Its subcellular location is the cell membrane. The protein resides in the golgi apparatus. In terms of biological role, its primary physiological function is unclear. Has cytoprotective activity against internal or environmental stresses. May play a role in neuronal development and synaptic plasticity. May be required for neuronal myelin sheath maintenance. May play a role in iron uptake and iron homeostasis. Soluble oligomers are toxic to cultured neuroblastoma cells and induce apoptosis (in vitro). Association with GPC1 (via its heparan sulfate chains) targets PRNP to lipid rafts. Also provides Cu(2+) or Zn(2+) for the ascorbate-mediated GPC1 deaminase degradation of its heparan sulfate side chains. In Moschus chrysogaster (Alpine musk deer), this protein is Major prion protein (PRNP).